Here is a 103-residue protein sequence, read N- to C-terminus: Large ribosomal subunit protein bL21 (103 aa).

It belongs to the bacterial ribosomal protein bL21 family. Part of the 50S ribosomal subunit. Contacts protein L20.

In terms of biological role, this protein binds to 23S rRNA in the presence of protein L20. This is Large ribosomal subunit protein bL21 from Methylococcus capsulatus (strain ATCC 33009 / NCIMB 11132 / Bath).